Consider the following 458-residue polypeptide: Serine--tRNA ligase (458 aa).

252–254 is an L-serine binding site; it reads TAE. Residues 283 to 285 and valine 299 contribute to the ATP site; that span reads RKE. Glutamate 306 contributes to the L-serine binding site. 370–373 is a binding site for ATP; that stretch reads EMVS. Threonine 405 lines the L-serine pocket.

This sequence belongs to the class-II aminoacyl-tRNA synthetase family. Type-1 seryl-tRNA synthetase subfamily. As to quaternary structure, homodimer. The tRNA molecule binds across the dimer.

The protein resides in the cytoplasm. The catalysed reaction is tRNA(Ser) + L-serine + ATP = L-seryl-tRNA(Ser) + AMP + diphosphate + H(+). It carries out the reaction tRNA(Sec) + L-serine + ATP = L-seryl-tRNA(Sec) + AMP + diphosphate + H(+). The protein operates within aminoacyl-tRNA biosynthesis; selenocysteinyl-tRNA(Sec) biosynthesis; L-seryl-tRNA(Sec) from L-serine and tRNA(Sec): step 1/1. Functionally, catalyzes the attachment of serine to tRNA(Ser). Is also able to aminoacylate tRNA(Sec) with serine, to form the misacylated tRNA L-seryl-tRNA(Sec), which will be further converted into selenocysteinyl-tRNA(Sec). This is Serine--tRNA ligase from Sulfolobus acidocaldarius (strain ATCC 33909 / DSM 639 / JCM 8929 / NBRC 15157 / NCIMB 11770).